The primary structure comprises 173 residues: Photosystem I assembly protein Ycf3 (173 aa).

3 TPR repeats span residues 35 to 68 (AYVY…EENS), 72 to 105 (SETL…NPNQ), and 120 to 153 (GRIA…NPGG).

This sequence belongs to the Ycf3 family.

It localises to the cellular thylakoid membrane. Functionally, essential for the assembly of the photosystem I (PSI) complex. May act as a chaperone-like factor to guide the assembly of the PSI subunits. The sequence is that of Photosystem I assembly protein Ycf3 from Synechococcus sp. (strain CC9605).